The chain runs to 157 residues: uncharacterized protein (157 aa).

This sequence belongs to the MG067/MG068/MG395 family.

This is an uncharacterized protein from Mycoplasma pneumoniae (strain ATCC 29342 / M129 / Subtype 1) (Mycoplasmoides pneumoniae).